We begin with the raw amino-acid sequence, 359 residues long: Protein HEXIM1 (359 aa).

A disordered region spans residues 1-163 (MAEPFLSEYQ…RRRPSKKKRH (163 aa)). The segment covering 9–19 (YQHQPQTSNCT) has biased composition (polar residues). 2 stretches are compositionally biased toward basic and acidic residues: residues 34-47 (PGAEERVPEEDSRW) and 84-93 (CLREGEKGQN). Phosphoserine is present on residues serine 97 and serine 98. Basic residues predominate over residues 148–163 (LGKKKHRRRPSKKKRH). The tract at residues 150–177 (KKKHRRRPSKKKRHWKPYYKLTWEEKKK) is basic region; mediates nuclear localization and interaction with 7SK snRNA and NR3C1. The tract at residues 202–205 (PYNT) is interaction with P-TEFb. The interval 210–250 (MDDHDQEEPDLKTGLYSKRAAAKSDDTSDDDFMEEGGEEDG) is autoinhibitory acidic region; in absence of 7SK snRNA interacts with the basic region preventing interaction with P-TEFb and modulating subcellular localization. The tract at residues 213-262 (HDQEEPDLKTGLYSKRAAAKSDDTSDDDFMEEGGEEDGGSDGMGGDGSEF) is disordered. Residue serine 233 is modified to Phosphoserine. Threonine 236 carries the phosphothreonine modification. Residues 236 to 251 (TSDDDFMEEGGEEDGG) are compositionally biased toward acidic residues. Serine 237, serine 252, and serine 260 each carry phosphoserine. Positions 283-349 (SKQELIKEYL…LTENELHRQQ (67 aa)) form a coiled coil. Residues 286-314 (ELIKEYLELEKCLSRMEDENNRLRLESKR) are mediates interaction with CCNT1. The segment at 310–355 (LESKRLGGDDARVRELELELDRLRAENLQLLTENELHRQQERAPLS) is required for inhibition of ESR1-dependent transcription.

The protein belongs to the HEXIM family. Homooligomer and heterooligomer with HEXIM2; probably dimeric. Core component of the 7SK RNP complex, at least composed of 7SK RNA, LARP7, MEPCE, HEXIM1 (or HEXIM2) and P-TEFb (composed of CDK9 and CCNT1/cyclin-T1). Interacts with the N-CoR complex through NCOR1. Interacts with ESR1 and NR3C1. May interact with NF-kappa-B through RELA. Interacts with CCNT2; mediates formation of a tripartite complex with KPNA2. Part of the HDP-RNP complex composed of at least HEXIM1, PRKDC, XRCC5, XRCC6, paraspeckle proteins (SFPQ, NONO, PSPC1, RBM14, and MATR3) and NEAT1 non-coding RNA. In terms of tissue distribution, ubiquitously expressed with higher expression in placenta. HEXIM1 and HEXIM2 are differentially expressed. Expressed in endocrine tissues.

It localises to the nucleus. It is found in the cytoplasm. In terms of biological role, transcriptional regulator which functions as a general RNA polymerase II transcription inhibitor. Core component of the 7SK RNP complex: in cooperation with 7SK snRNA sequesters P-TEFb in a large inactive 7SK snRNP complex preventing RNA polymerase II phosphorylation and subsequent transcriptional elongation. May also regulate NF-kappa-B, ESR1, NR3C1 and CIITA-dependent transcriptional activity. Plays a role in the regulation of DNA virus-mediated innate immune response by assembling into the HDP-RNP complex, a complex that serves as a platform for IRF3 phosphorylation and subsequent innate immune response activation through the cGAS-STING pathway. The chain is Protein HEXIM1 (HEXIM1) from Homo sapiens (Human).